Reading from the N-terminus, the 358-residue chain is UDP-N-acetylglucosamine--N-acetylmuramyl-(pentapeptide) pyrophosphoryl-undecaprenol N-acetylglucosamine transferase (358 aa).

UDP-N-acetyl-alpha-D-glucosamine contacts are provided by residues 11 to 13 (TGG), N122, R161, S189, I243, 262 to 267 (ALTVCE), and Q288.

The protein belongs to the glycosyltransferase 28 family. MurG subfamily.

It localises to the cell inner membrane. It carries out the reaction di-trans,octa-cis-undecaprenyl diphospho-N-acetyl-alpha-D-muramoyl-L-alanyl-D-glutamyl-meso-2,6-diaminopimeloyl-D-alanyl-D-alanine + UDP-N-acetyl-alpha-D-glucosamine = di-trans,octa-cis-undecaprenyl diphospho-[N-acetyl-alpha-D-glucosaminyl-(1-&gt;4)]-N-acetyl-alpha-D-muramoyl-L-alanyl-D-glutamyl-meso-2,6-diaminopimeloyl-D-alanyl-D-alanine + UDP + H(+). It participates in cell wall biogenesis; peptidoglycan biosynthesis. Cell wall formation. Catalyzes the transfer of a GlcNAc subunit on undecaprenyl-pyrophosphoryl-MurNAc-pentapeptide (lipid intermediate I) to form undecaprenyl-pyrophosphoryl-MurNAc-(pentapeptide)GlcNAc (lipid intermediate II). This is UDP-N-acetylglucosamine--N-acetylmuramyl-(pentapeptide) pyrophosphoryl-undecaprenol N-acetylglucosamine transferase from Coxiella burnetii (strain CbuK_Q154) (Coxiella burnetii (strain Q154)).